The following is a 143-amino-acid chain: Large ribosomal subunit protein uL15 (143 aa).

The interval 1-48 (MRLNTISPSKGAKHSSKRLGRGIGSGLGKTSGRGHKGQKARSGCSIHR) is disordered. The segment covering 11–20 (GAKHSSKRLG) has biased composition (basic residues). Positions 21-31 (RGIGSGLGKTS) are enriched in gly residues.

This sequence belongs to the universal ribosomal protein uL15 family. Part of the 50S ribosomal subunit.

In terms of biological role, binds to the 23S rRNA. This is Large ribosomal subunit protein uL15 from Baumannia cicadellinicola subsp. Homalodisca coagulata.